The primary structure comprises 215 residues: Probable transaldolase (215 aa).

K83 serves as the catalytic Schiff-base intermediate with substrate.

It belongs to the transaldolase family. Type 3B subfamily.

The protein localises to the cytoplasm. It catalyses the reaction D-sedoheptulose 7-phosphate + D-glyceraldehyde 3-phosphate = D-erythrose 4-phosphate + beta-D-fructose 6-phosphate. Its pathway is carbohydrate degradation; pentose phosphate pathway; D-glyceraldehyde 3-phosphate and beta-D-fructose 6-phosphate from D-ribose 5-phosphate and D-xylulose 5-phosphate (non-oxidative stage): step 2/3. Functionally, transaldolase is important for the balance of metabolites in the pentose-phosphate pathway. The protein is Probable transaldolase of Clostridium kluyveri (strain NBRC 12016).